The primary structure comprises 24 residues: GFRDVLKGAAKAFVKTVAGHIANI.

Expressed by the skin glands.

It localises to the secreted. In terms of biological role, antimicrobial peptide that shows higher potency against Gram-negative bacteria than against Gram-positive bacteria. Has a very week hemolytic activity. The sequence is that of Ascaphin-3 from Ascaphus truei (Coastal tailed frog).